The following is a 198-amino-acid chain: uncharacterized protein (198 aa).

Residues 1–23 (MYFGKTRQSDQSGRVPPNQNVTT) form a disordered region. Residues 9-23 (SDQSGRVPPNQNVTT) are compositionally biased toward polar residues. The Mo-molybdopterin site is built by Cys75, His144, and Arg149.

Requires Mo-molybdopterin as cofactor.

This is an uncharacterized protein from Bacillus subtilis (strain 168).